The sequence spans 255 residues: MLLVIDIGNSNIVLGLYEGDELQHHWRVSTDRNKTEDEYGMLVKSLFGSVGLGFEQVRGVIISSVVPPLNLTIERMCGKYMQQKALIIGPGIKTGLNIKYEYPREVGSDRIVNAVAAIHHYGAPLIVVDFGTATTFCYVDERAQYWGGAIAPGIGISTEALFTRAAKLPRIEITKPASVVGRNTIAAMQAGIFYGFVGQVEGIVRRIMDEYGTQPTVVATGGLASLFANETSCIHVVDQNLTLKGLRLIYERNQS.

Position 6–13 (6–13) interacts with ATP; sequence DIGNSNIV. Substrate-binding positions include tyrosine 100 and 107–110; that span reads GSDR. Aspartate 109 serves as the catalytic Proton acceptor. Aspartate 129 contacts K(+). Threonine 132 contacts ATP. Residue threonine 184 coordinates substrate.

This sequence belongs to the type III pantothenate kinase family. As to quaternary structure, homodimer. It depends on NH4(+) as a cofactor. The cofactor is K(+).

It localises to the cytoplasm. The enzyme catalyses (R)-pantothenate + ATP = (R)-4'-phosphopantothenate + ADP + H(+). Its pathway is cofactor biosynthesis; coenzyme A biosynthesis; CoA from (R)-pantothenate: step 1/5. Functionally, catalyzes the phosphorylation of pantothenate (Pan), the first step in CoA biosynthesis. This chain is Type III pantothenate kinase, found in Brevibacillus brevis (strain 47 / JCM 6285 / NBRC 100599).